The primary structure comprises 348 residues: Macrophage-capping protein (348 aa).

Met1 is subject to N-acetylmethionine. The Gelsolin-like 1 repeat unit spans residues 27–75 (EKLKPVPVAQENQGVFFSGDSYLVLHNGPEEVSHLHLWIGQQSSRDEQG). The short motif at 137–146 (KKLYQVKGKK) is the Nuclear localization signal element. Gelsolin-like repeat units lie at residues 148–188 (IRAT…LERN) and 261–307 (MNLT…KERQ). The residue at position 337 (Ser337) is a Phosphoserine.

The protein belongs to the villin/gelsolin family. Interacts with NUP62. Interacts with NUTF2 and RAN; involved in CAPG nuclear import. In terms of processing, the N-terminus is blocked. As to expression, macrophages and macrophage-like cells.

The protein resides in the nucleus. It localises to the cytoplasm. Its subcellular location is the melanosome. The protein localises to the cell projection. It is found in the lamellipodium. The protein resides in the ruffle. Calcium-sensitive protein which reversibly blocks the barbed ends of actin filaments but does not sever preformed actin filaments. May play an important role in macrophage function. May play a role in regulating cytoplasmic and/or nuclear structures through potential interactions with actin. May bind DNA. The chain is Macrophage-capping protein (CAPG) from Homo sapiens (Human).